A 147-amino-acid polypeptide reads, in one-letter code: Protein archease (147 aa).

Ca(2+)-binding residues include Asp-17, Asp-146, and Ile-147.

It belongs to the archease family.

In terms of biological role, activates the tRNA-splicing ligase complex by facilitating the enzymatic turnover of catalytic subunit RtcB. Acts by promoting the guanylylation of RtcB, a key intermediate step in tRNA ligation. Can also alter the NTP specificity of RtcB such that ATP, dGTP or ITP is used efficiently. This Pyrobaculum calidifontis (strain DSM 21063 / JCM 11548 / VA1) protein is Protein archease.